The chain runs to 506 residues: Carboxypeptidase Y homolog ARB_06361 (506 aa).

Positions 1 to 15 are cleaved as a signal peptide; sequence MHVAILLAIISLARA. Asparagine 108 is a glycosylation site (N-linked (GlcNAc...) asparagine). Residue serine 179 is part of the active site. N-linked (GlcNAc...) asparagine glycans are attached at residues asparagine 280, asparagine 316, and asparagine 349. Aspartate 427 is a catalytic residue. A glycan (N-linked (GlcNAc...) asparagine) is linked at asparagine 441. The active site involves histidine 485.

It belongs to the peptidase S10 family.

The protein resides in the secreted. The enzyme catalyses Release of a C-terminal amino acid with broad specificity.. Its function is as follows. Involved in degradation of small peptides. The sequence is that of Carboxypeptidase Y homolog ARB_06361 from Arthroderma benhamiae (strain ATCC MYA-4681 / CBS 112371) (Trichophyton mentagrophytes).